A 357-amino-acid chain; its full sequence is Heat-inducible transcription repressor HrcA (357 aa).

It belongs to the HrcA family.

Negative regulator of class I heat shock genes (grpE-dnaK-dnaJ and groELS operons). Prevents heat-shock induction of these operons. The sequence is that of Heat-inducible transcription repressor HrcA from Chlorobium luteolum (strain DSM 273 / BCRC 81028 / 2530) (Pelodictyon luteolum).